The primary structure comprises 84 residues: Small ribosomal subunit protein bS18 (84 aa).

The protein belongs to the bacterial ribosomal protein bS18 family. Part of the 30S ribosomal subunit. Forms a tight heterodimer with protein bS6.

Its function is as follows. Binds as a heterodimer with protein bS6 to the central domain of the 16S rRNA, where it helps stabilize the platform of the 30S subunit. The polypeptide is Small ribosomal subunit protein bS18 (Mycobacterium leprae (strain Br4923)).